Reading from the N-terminus, the 361-residue chain is Ribosomal RNA large subunit methyltransferase M (361 aa).

S-adenosyl-L-methionine-binding positions include S193, 226 to 229 (CPGG), D245, D265, and D283. The active-site Proton acceptor is the K312.

Belongs to the class I-like SAM-binding methyltransferase superfamily. RNA methyltransferase RlmE family. RlmM subfamily. In terms of assembly, monomer.

Its subcellular location is the cytoplasm. It carries out the reaction cytidine(2498) in 23S rRNA + S-adenosyl-L-methionine = 2'-O-methylcytidine(2498) in 23S rRNA + S-adenosyl-L-homocysteine + H(+). Its function is as follows. Catalyzes the 2'-O-methylation at nucleotide C2498 in 23S rRNA. The chain is Ribosomal RNA large subunit methyltransferase M from Histophilus somni (strain 129Pt) (Haemophilus somnus).